We begin with the raw amino-acid sequence, 61 residues long: Large ribosomal subunit protein uL30 (61 aa).

Belongs to the universal ribosomal protein uL30 family. In terms of assembly, part of the 50S ribosomal subunit.

In Bifidobacterium longum (strain DJO10A), this protein is Large ribosomal subunit protein uL30.